A 529-amino-acid polypeptide reads, in one-letter code: Bifunctional purine biosynthesis protein PurH (529 aa).

The 148-residue stretch at 2–149 (TNLVPVGRAL…KNHRFVNVVT (148 aa)) folds into the MGS-like domain.

This sequence belongs to the PurH family.

It catalyses the reaction (6R)-10-formyltetrahydrofolate + 5-amino-1-(5-phospho-beta-D-ribosyl)imidazole-4-carboxamide = 5-formamido-1-(5-phospho-D-ribosyl)imidazole-4-carboxamide + (6S)-5,6,7,8-tetrahydrofolate. The enzyme catalyses IMP + H2O = 5-formamido-1-(5-phospho-D-ribosyl)imidazole-4-carboxamide. It participates in purine metabolism; IMP biosynthesis via de novo pathway; 5-formamido-1-(5-phospho-D-ribosyl)imidazole-4-carboxamide from 5-amino-1-(5-phospho-D-ribosyl)imidazole-4-carboxamide (10-formyl THF route): step 1/1. The protein operates within purine metabolism; IMP biosynthesis via de novo pathway; IMP from 5-formamido-1-(5-phospho-D-ribosyl)imidazole-4-carboxamide: step 1/1. The polypeptide is Bifunctional purine biosynthesis protein PurH (Cereibacter sphaeroides (strain ATCC 17029 / ATH 2.4.9) (Rhodobacter sphaeroides)).